The primary structure comprises 132 residues: Aspartate 1-decarboxylase (132 aa).

S25 acts as the Schiff-base intermediate with substrate; via pyruvic acid in catalysis. S25 carries the post-translational modification Pyruvic acid (Ser). T57 is a binding site for substrate. Y58 serves as the catalytic Proton donor. G73 to A75 contacts substrate.

Belongs to the PanD family. Heterooctamer of four alpha and four beta subunits. Requires pyruvate as cofactor. In terms of processing, is synthesized initially as an inactive proenzyme, which is activated by self-cleavage at a specific serine bond to produce a beta-subunit with a hydroxyl group at its C-terminus and an alpha-subunit with a pyruvoyl group at its N-terminus.

The protein localises to the cytoplasm. The catalysed reaction is L-aspartate + H(+) = beta-alanine + CO2. It functions in the pathway cofactor biosynthesis; (R)-pantothenate biosynthesis; beta-alanine from L-aspartate: step 1/1. Catalyzes the pyruvoyl-dependent decarboxylation of aspartate to produce beta-alanine. This is Aspartate 1-decarboxylase from Heliobacterium modesticaldum (strain ATCC 51547 / Ice1).